We begin with the raw amino-acid sequence, 440 residues long: uncharacterized protein (440 aa).

An N-terminal signal peptide occupies residues 1–19 (MKKLLLAASIIYFASVSLA).

This is an uncharacterized protein from Rickettsia typhi (strain ATCC VR-144 / Wilmington).